Reading from the N-terminus, the 913-residue chain is Protein SEY1 homolog (913 aa).

The Cytoplasmic segment spans residues 1–825; sequence MANASKTQII…ETGGQMSLKN (825 aa). Positions 33–288 constitute a GB1/RHD3-type G domain; sequence GFNYNVIAIL…IPADGFAQYC (256 aa). Residue 43-50 coordinates GTP; the sequence is GSQSSGKS. Disordered stretches follow at residues 89–108 and 436–455; these read AGGS…GDKP and TEQD…AKKG. Coiled-coil stretches lie at residues 636-659 and 703-727; these read DDEN…MESL and IEII…VIIN. A helical membrane pass occupies residues 826 to 846; that stretch reads VPFAFWVILLILGWNEILMFT. The Lumenal segment spans residues 847–849; it reads RLF. A helical transmembrane segment spans residues 850-870; that stretch reads FRLNIILPMFMAFIIIVGSCL. Over 871–913 the chain is Cytoplasmic; it reads YTGNAQVLSYLNKIAFIVIKHSYNFYKHLQTVGNQPTKPEKVD.

This sequence belongs to the TRAFAC class dynamin-like GTPase superfamily. GB1/RHD3 GTPase family. RHD3 subfamily.

The protein localises to the endoplasmic reticulum membrane. Functionally, probable GTP-binding protein involved in generating and maintaining the structure of the tubular endoplasmic reticulum network. This Plasmodium chabaudi chabaudi protein is Protein SEY1 homolog.